A 500-amino-acid chain; its full sequence is Ribose import ATP-binding protein RbsA (500 aa).

ABC transporter domains lie at 6 to 242 (LALS…VGRK) and 252 to 495 (AQQG…VGRN). ATP is bound at residue 38-45 (GENGAGKS).

This sequence belongs to the ABC transporter superfamily. Ribose importer (TC 3.A.1.2.1) family. In terms of assembly, the complex is composed of an ATP-binding protein (RbsA), two transmembrane proteins (RbsC) and a solute-binding protein (RbsB).

Its subcellular location is the cell inner membrane. The enzyme catalyses D-ribose(out) + ATP + H2O = D-ribose(in) + ADP + phosphate + H(+). In terms of biological role, part of the ABC transporter complex RbsABC involved in ribose import. Responsible for energy coupling to the transport system. The polypeptide is Ribose import ATP-binding protein RbsA (Vibrio cholerae serotype O1 (strain ATCC 39315 / El Tor Inaba N16961)).